We begin with the raw amino-acid sequence, 904 residues long: Protein translocase subunit SecA (904 aa).

ATP contacts are provided by residues Q89, 107–111 (GEGKT), and D496. The segment at 870 to 904 (GGFQELSSGTPSPTVTVTTSSGGGTERKTSRRRKR) is disordered. The segment covering 876–889 (SSGTPSPTVTVTTS) has biased composition (low complexity).

This sequence belongs to the SecA family. Monomer and homodimer. Part of the essential Sec protein translocation apparatus which comprises SecA, SecYEG and auxiliary proteins SecDF. Other proteins may also be involved.

Its subcellular location is the cell inner membrane. The protein localises to the cytoplasm. It catalyses the reaction ATP + H2O + cellular proteinSide 1 = ADP + phosphate + cellular proteinSide 2.. Part of the Sec protein translocase complex. Interacts with the SecYEG preprotein conducting channel. Has a central role in coupling the hydrolysis of ATP to the transfer of proteins into and across the cell membrane, serving as an ATP-driven molecular motor driving the stepwise translocation of polypeptide chains across the membrane. The protein is Protein translocase subunit SecA of Leptospira borgpetersenii serovar Hardjo-bovis (strain JB197).